We begin with the raw amino-acid sequence, 56 residues long: GYTHAFESTFESKSGLQEYLDSAALAAFAEGFLPTLSQRSFNWGTDLGMESAELNR.

The Stress-response A/B barrel domain occupies 1-44 (GYTHAFESTFESKSGLQEYLDSAALAAFAEGFLPTLSQRSFNWG).

The sequence is that of Stable protein 1 from Populus euphratica (Euphrates poplar).